A 490-amino-acid polypeptide reads, in one-letter code: MVPVVALVGRPNVGKSTLFNRLTRTRDALVADFPGLTRDRKYGRAEVEGREFICIDTGGIDGTEDGVETRMAEQSLLAIEEADVVLFMVDARAGLMPADEAIAKHLRSREKPTFLVANKTDGLDPDQAVVDFYSLGLGEIYPIAASHGRGVLSLLEHVLLPWMDDVAPQEEVDEDAEYWAQFEVEQNGEEAPEDDFDPQSLPIKLAIVGRPNVGKSTLTNRILGEERVVVYDMPGTTRDSIYIPMERDEREYVLIDTAGVRKRGKITDAVEKFSVIKTLQAIEDANVVLLVIDAREGISDQDLSLLGFILNSGRSLVIVVNKWDGLSQEVKEQVKETLDFRLGFIDFARVHFISALHGSGVGNLFESVREAYDSSTRRVSTAMLTRIMTMAVEDHQPPLVRGRRVKLKYAHAGGYNPPIVVIHGNQVKDLPDSYKRYLMNYFRKSLEVMGTPIRIQFKEGENPYANKRNTLTPTQMRKRKRLMKHIKKSK.

2 consecutive EngA-type G domains span residues 3–166 (PVVA…MDDV) and 203–376 (IKLA…DSST). Residues 9–16 (GRPNVGKS), 56–60 (DTGGI), 118–121 (NKTD), 209–216 (GRPNVGKS), 256–260 (DTAGV), and 321–324 (NKWD) contribute to the GTP site. One can recognise a KH-like domain in the interval 377–461 (RRVSTAMLTR…PIRIQFKEGE (85 aa)).

The protein belongs to the TRAFAC class TrmE-Era-EngA-EngB-Septin-like GTPase superfamily. EngA (Der) GTPase family. In terms of assembly, associates with the 50S ribosomal subunit.

GTPase that plays an essential role in the late steps of ribosome biogenesis. The sequence is that of GTPase Der from Salmonella enteritidis PT4 (strain P125109).